The following is a 70-amino-acid chain: Conotoxin Lt3.4 (70 aa).

Residues 1–24 form the signal peptide; it reads MLKMGVLLFTFLVLFPLAMFQLDA. The propeptide occupies 25 to 54; that stretch reads DQPVERYAENKQDLNRDERMKIMLSALRQR. Q55 carries the post-translational modification Pyrrolidone carboxylic acid. 3 disulfide bridges follow: C56–C68, C57–C66, and C62–C69.

This sequence belongs to the conotoxin M superfamily. Expressed by the venom duct.

The protein resides in the secreted. This chain is Conotoxin Lt3.4, found in Conus litteratus (Lettered cone).